The following is an 880-amino-acid chain: MKNVTVKSLAVEMQISVDHLVQQFSNVGFHKTARDYVTQQEKETLLAYLKYELSNTPLTLQRKTRSTLNIASTSGRSKSVQVEVRKKHIYIQPVAHDSILTIKENILPNNTQEVKNNAEASPKTKFILTPKQQSKIAKNNIVNNQNNLIKKSRQISEKAILEAKAAELKHQAEEETRRKVEEKARQIAEEARQFAEHNDSIWMTTPELAEDDTIDDNLSNYHYASIVEDENNRKIENERRTRGNKVSKQKTYRLSEFKKNREEARAVGRSSKSQSKRKSSTLMQVFNKPSQVINRDIVIGEMITVAELANKMAVKGSQIIKKLIQLGVMATINQIIDRETAQLVAEDMGHKVILLRENELEESIMKDRKIDSSVDNAESRAPVVTIMGHVDHGKTSLLDYIRSTKVVASEAGGITQHIGAYHVETDRGMITFLDTPGHAAFTAMRARGARTTDIVVLVVAADNGAMPQTIEAIQHAKAAKVPIVVAVNKIDKKEANPENIKNELTKHGIIPEEWGGQNQFVNISAKYGTGINNLLDAILLQAEVLELKAIRNGIASGIVIESFLDKGRGPVATILVREGTLHHGDMILCGLEYGRVRAMRDEQGRHLSTAGPSVPVEILGLSGVPIAGDEAMVVRDEKKAREVALYRQGKFREGKLARKHSAKLENMFTNISEGGILELNIILKTDVQGSVEAINDALEQLSTEKAKVKIIGSGVGGITETDATLAAASNAILIGFNVRADASARRIIDKENLNIHYYSVIYHLINEVTQAMNGMLTPEYKQDIIGLAEVRNVFSVPKFGLIAGCMVIEGIVKRHNNIRVIRNNIIIYEGELYSLRRFKDDVNEVRNGMECGIGVKNYTDIRTGDIIEVFKLIPIIKSSN.

A disordered region spans residues 259–281; the sequence is KNREEARAVGRSSKSQSKRKSST. One can recognise a tr-type G domain in the interval 379 to 548; that stretch reads SRAPVVTIMG…LLQAEVLELK (170 aa). A G1 region spans residues 388–395; that stretch reads GHVDHGKT. Residue 388–395 coordinates GTP; it reads GHVDHGKT. The G2 stretch occupies residues 413–417; it reads GITQH. The segment at 434 to 437 is G3; the sequence is DTPG. GTP-binding positions include 434 to 438 and 488 to 491; these read DTPGH and NKID. Positions 488 to 491 are G4; the sequence is NKID. Residues 524–526 form a G5 region; that stretch reads SAK.

It belongs to the TRAFAC class translation factor GTPase superfamily. Classic translation factor GTPase family. IF-2 subfamily.

It is found in the cytoplasm. One of the essential components for the initiation of protein synthesis. Protects formylmethionyl-tRNA from spontaneous hydrolysis and promotes its binding to the 30S ribosomal subunits. Also involved in the hydrolysis of GTP during the formation of the 70S ribosomal complex. This is Translation initiation factor IF-2 from Baumannia cicadellinicola subsp. Homalodisca coagulata.